Reading from the N-terminus, the 288-residue chain is Elongation factor Ts (288 aa).

The tract at residues 79–82 (TDFV) is involved in Mg(2+) ion dislocation from EF-Tu.

Belongs to the EF-Ts family.

The protein localises to the cytoplasm. In terms of biological role, associates with the EF-Tu.GDP complex and induces the exchange of GDP to GTP. It remains bound to the aminoacyl-tRNA.EF-Tu.GTP complex up to the GTP hydrolysis stage on the ribosome. In Ehrlichia chaffeensis (strain ATCC CRL-10679 / Arkansas), this protein is Elongation factor Ts.